The primary structure comprises 315 residues: Probable cell division protein WhiA (315 aa).

Residues 277–311 constitute a DNA-binding region (H-T-H motif); the sequence is SLQELGAMMPSGQISKSGVNHRLRKLNQIAEGYQQ.

The protein belongs to the WhiA family.

Functionally, involved in cell division and chromosome segregation. The sequence is that of Probable cell division protein WhiA from Lacticaseibacillus casei (strain BL23) (Lactobacillus casei).